The chain runs to 341 residues: Glyceraldehyde-3-phosphate dehydrogenase 2 (341 aa).

NAD(+) is bound by residues 12–13, R78, and T120; that span reads RI. Residues 152-154 and T183 each bind D-glyceraldehyde 3-phosphate; that span reads SCT. C153 acts as the Nucleophile in catalysis. NAD(+) is bound at residue N184. D-glyceraldehyde 3-phosphate is bound by residues R198, 211–212, and R234; that span reads TG. N313 provides a ligand contact to NAD(+).

This sequence belongs to the glyceraldehyde-3-phosphate dehydrogenase family. In terms of assembly, homotetramer.

Its subcellular location is the cytoplasm. It carries out the reaction D-glyceraldehyde 3-phosphate + phosphate + NAD(+) = (2R)-3-phospho-glyceroyl phosphate + NADH + H(+). The protein operates within carbohydrate degradation; glycolysis; pyruvate from D-glyceraldehyde 3-phosphate: step 1/5. In terms of biological role, catalyzes the oxidative phosphorylation of glyceraldehyde 3-phosphate (G3P) to 1,3-bisphosphoglycerate (BPG) using the cofactor NAD. The first reaction step involves the formation of a hemiacetal intermediate between G3P and a cysteine residue, and this hemiacetal intermediate is then oxidized to a thioester, with concomitant reduction of NAD to NADH. The reduced NADH is then exchanged with the second NAD, and the thioester is attacked by a nucleophilic inorganic phosphate to produce BPG. This chain is Glyceraldehyde-3-phosphate dehydrogenase 2 (gapA2), found in Staphylococcus aureus (strain MRSA252).